We begin with the raw amino-acid sequence, 128 residues long: Small ribosomal subunit protein uS12 (128 aa).

3-methylthioaspartic acid is present on aspartate 89. Positions 101-128 are disordered; sequence SLDTSGVADRRQGRSKYGAKRPKGAAAK. Positions 113–128 are enriched in basic residues; the sequence is GRSKYGAKRPKGAAAK.

The protein belongs to the universal ribosomal protein uS12 family. Part of the 30S ribosomal subunit. Contacts proteins S8 and S17. May interact with IF1 in the 30S initiation complex.

Its function is as follows. With S4 and S5 plays an important role in translational accuracy. Functionally, interacts with and stabilizes bases of the 16S rRNA that are involved in tRNA selection in the A site and with the mRNA backbone. Located at the interface of the 30S and 50S subunits, it traverses the body of the 30S subunit contacting proteins on the other side and probably holding the rRNA structure together. The combined cluster of proteins S8, S12 and S17 appears to hold together the shoulder and platform of the 30S subunit. The chain is Small ribosomal subunit protein uS12 from Prosthecochloris aestuarii (strain DSM 271 / SK 413).